The primary structure comprises 323 residues: ADP-L-glycero-D-manno-heptose-6-epimerase (323 aa).

NADP(+) contacts are provided by residues 10–11 (FI), 31–32 (DN), K38, R53, 75–79 (MGACS), and N92. Y143 (proton acceptor) is an active-site residue. K147 is a binding site for NADP(+). N170 provides a ligand contact to substrate. NADP(+) is bound by residues V171 and K179. K179 acts as the Proton acceptor in catalysis. Residues D181, K188, 202–205 (FRSC), R216, and Y281 contribute to the substrate site.

It belongs to the NAD(P)-dependent epimerase/dehydratase family. HldD subfamily. As to quaternary structure, homopentamer. It depends on NADP(+) as a cofactor.

It catalyses the reaction ADP-D-glycero-beta-D-manno-heptose = ADP-L-glycero-beta-D-manno-heptose. Its pathway is nucleotide-sugar biosynthesis; ADP-L-glycero-beta-D-manno-heptose biosynthesis; ADP-L-glycero-beta-D-manno-heptose from D-glycero-beta-D-manno-heptose 7-phosphate: step 4/4. Catalyzes the interconversion between ADP-D-glycero-beta-D-manno-heptose and ADP-L-glycero-beta-D-manno-heptose via an epimerization at carbon 6 of the heptose. The protein is ADP-L-glycero-D-manno-heptose-6-epimerase of Nitratidesulfovibrio vulgaris (strain ATCC 29579 / DSM 644 / CCUG 34227 / NCIMB 8303 / VKM B-1760 / Hildenborough) (Desulfovibrio vulgaris).